Reading from the N-terminus, the 60-residue chain is MPFVRIDLFEGRTLEQKKALAKEVTEAVVRNTGAPQSAVHVIINDMPEGTYFPQGEMRTK.

Pro-2 (proton acceptor; via imino nitrogen) is an active-site residue.

It belongs to the 4-oxalocrotonate tautomerase family.

In Streptococcus pneumoniae serotype 4 (strain ATCC BAA-334 / TIGR4), this protein is Probable tautomerase SP_1017.